Reading from the N-terminus, the 147-residue chain is 3-dehydroquinate dehydratase (147 aa).

Tyr-24 functions as the Proton acceptor in the catalytic mechanism. Substrate-binding residues include Asn-74, His-80, and Asp-87. Residue His-100 is the Proton donor of the active site. Substrate contacts are provided by residues 101–102 (LS) and Arg-111.

The protein belongs to the type-II 3-dehydroquinase family. In terms of assembly, homododecamer.

The catalysed reaction is 3-dehydroquinate = 3-dehydroshikimate + H2O. Its pathway is metabolic intermediate biosynthesis; chorismate biosynthesis; chorismate from D-erythrose 4-phosphate and phosphoenolpyruvate: step 3/7. In terms of biological role, catalyzes a trans-dehydration via an enolate intermediate. In Azorhizobium caulinodans (strain ATCC 43989 / DSM 5975 / JCM 20966 / LMG 6465 / NBRC 14845 / NCIMB 13405 / ORS 571), this protein is 3-dehydroquinate dehydratase.